The primary structure comprises 484 residues: FAD-dependent monooxygenase aurC (484 aa).

The signal sequence occupies residues 1–21 (MGAYSFRVIIVGGSITGMTLA). Residues Glu-35, Gly-49, and Arg-108 each coordinate FAD. Residue Tyr-216 is part of the active site. Positions 308 and 321 each coordinate FAD. A helical transmembrane segment spans residues 451-471 (FAVASLIVLIVVLARALDSPA).

This sequence belongs to the paxM FAD-dependent monooxygenase family. FAD is required as a cofactor.

The protein localises to the membrane. It functions in the pathway polyketide biosynthesis. FAD-dependent monooxygenase; part of the gene cluster that mediates the biosynthesis of aurovertins, fungal polyketides that exhibit potent inhibition of adenosine triphosphate synthase. Tha biosynthesis starts with the HR-PKS aurA that selects propionate as the starter unit; synthesizes a hexa-ene chain through the repeated functions of the KR and DH domains in the first six iterations; selectively introduces three alpha-methyl substitutions at C4, C6, and C16 using the S-adensylmethionine-dependent cMET; and shuts off KR and DH in the last three iterations to afford a 1,3,5-triketo portion that can undergo intramolecular cyclization to yield the alpha-pyrone intermediate. AurE may act as a cyclase and enhances the rate of pyrone formation and product release of aurA. The methyltransferase aurB then methylates the C17 hydroxyl group. C17 methylation is required to initiate epoxidation by the downstream monooxygenase aurC. The monooxygenase aurC and the epoxide hydrolase aurD can iteratively transform the terminal triene portion of the methylated precursor into the dioxabicyclo[3.2.1]octane scaffold of aurovertin E. Epoxidation modifications of the precursor occur in two separate steps; bis-epoxidation of the two terminal olefins takes place first, followed by another epoxidation that occurs at C7-C8 after tetrahydrofuran formation. The O-acyltransferase aurG converts aurovertin E to aurovertin A. This chain is FAD-dependent monooxygenase aurC, found in Calcarisporium arbuscula (Dendryphion arbuscula).